Consider the following 156-residue polypeptide: Large ribosomal subunit protein uL30 (156 aa).

Belongs to the universal ribosomal protein uL30 family. Part of the 50S ribosomal subunit.

The polypeptide is Large ribosomal subunit protein uL30 (Thermofilum pendens (strain DSM 2475 / Hrk 5)).